The sequence spans 200 residues: Holliday junction branch migration complex subunit RuvA (200 aa).

The tract at residues 1–64 (MIGHLRGIIV…EDAHTLYGFH (64 aa)) is domain I. The segment at 65–143 (NDHERRLFRA…RWHTNDTPSP (79 aa)) is domain II. The segment at 133-152 (SRWHTNDTPSPEGLRSSNTQ) is disordered. The flexible linker stretch occupies residues 144-148 (EGLRS). The segment at 149 to 200 (SNTQPTQDAISALMALGYKPQEAKRAIDAIQKPDLSAETLIRLALKQMVLGT) is domain III.

It belongs to the RuvA family. In terms of assembly, homotetramer. Forms an RuvA(8)-RuvB(12)-Holliday junction (HJ) complex. HJ DNA is sandwiched between 2 RuvA tetramers; dsDNA enters through RuvA and exits via RuvB. An RuvB hexamer assembles on each DNA strand where it exits the tetramer. Each RuvB hexamer is contacted by two RuvA subunits (via domain III) on 2 adjacent RuvB subunits; this complex drives branch migration. In the full resolvosome a probable DNA-RuvA(4)-RuvB(12)-RuvC(2) complex forms which resolves the HJ.

It is found in the cytoplasm. Functionally, the RuvA-RuvB-RuvC complex processes Holliday junction (HJ) DNA during genetic recombination and DNA repair, while the RuvA-RuvB complex plays an important role in the rescue of blocked DNA replication forks via replication fork reversal (RFR). RuvA specifically binds to HJ cruciform DNA, conferring on it an open structure. The RuvB hexamer acts as an ATP-dependent pump, pulling dsDNA into and through the RuvAB complex. HJ branch migration allows RuvC to scan DNA until it finds its consensus sequence, where it cleaves and resolves the cruciform DNA. This chain is Holliday junction branch migration complex subunit RuvA, found in Coxiella burnetii (strain Dugway 5J108-111).